The primary structure comprises 309 residues: Malate dehydrogenase (309 aa).

Residues 9-14 and Asp-33 contribute to the NAD(+) site; that span reads GAGFVG. Substrate is bound by residues Arg-82 and Arg-88. Residues Asn-95 and 118 to 120 each bind NAD(+); that span reads VNN. Substrate contacts are provided by Asn-120 and Arg-151. His-175 acts as the Proton acceptor in catalysis.

Belongs to the LDH/MDH superfamily. MDH type 3 family.

The catalysed reaction is (S)-malate + NAD(+) = oxaloacetate + NADH + H(+). Its function is as follows. Catalyzes the reversible oxidation of malate to oxaloacetate. The protein is Malate dehydrogenase of Roseiflexus castenholzii (strain DSM 13941 / HLO8).